The sequence spans 968 residues: RNA polymerase-associated protein RapA (968 aa).

In terms of domain architecture, Helicase ATP-binding spans 164–334 (DVGRRHAPRV…FARLRLLDPN (171 aa)). 177 to 184 (DEVGLGKT) is a binding site for ATP. Residues 280 to 283 (DEAH) carry the DEAH box motif. The Helicase C-terminal domain maps to 490 to 662 (RVEWLMGYLT…YLASPDQTEG (173 aa)).

This sequence belongs to the SNF2/RAD54 helicase family. RapA subfamily. In terms of assembly, interacts with the RNAP. Has a higher affinity for the core RNAP than for the holoenzyme. Its ATPase activity is stimulated by binding to RNAP.

Its function is as follows. Transcription regulator that activates transcription by stimulating RNA polymerase (RNAP) recycling in case of stress conditions such as supercoiled DNA or high salt concentrations. Probably acts by releasing the RNAP, when it is trapped or immobilized on tightly supercoiled DNA. Does not activate transcription on linear DNA. Probably not involved in DNA repair. The polypeptide is RNA polymerase-associated protein RapA (Shigella boydii serotype 4 (strain Sb227)).